Consider the following 89-residue polypeptide: Arminin 375 (89 aa).

Positions 1-18 (MKAVFAILFLAFIALTYA) are cleaved as a signal peptide. A propeptide spanning residues 19-57 (KSYDEVKEEIKNEVEREIFEDLEEESDELDNYVEESNDA) is cleaved from the precursor. Ala-86 carries the alanine amide modification.

Belongs to the arminin family. Expressed in entodermal epithelium along the body column.

The protein resides in the secreted. Its subcellular location is the target cell membrane. Its function is as follows. Antimicrobial peptide with a broad-spectrum antimicrobial activity. Keeps its antibacterial activity under a wide range of salt concentrations that mimic physiological conditions of human blood, which is surprising, since Hydra is an obligate freshwater animal with nearly no salt tolerance. Does not affect red blood cells. This Hydra oligactis (Brown hydra) protein is Arminin 375.